The primary structure comprises 230 residues: Demethylmenaquinone methyltransferase (230 aa).

S-adenosyl-L-methionine is bound by residues Thr62, Asp80, 100 to 101, and Ser117; that span reads DA.

Belongs to the class I-like SAM-binding methyltransferase superfamily. MenG/UbiE family.

The enzyme catalyses a 2-demethylmenaquinol + S-adenosyl-L-methionine = a menaquinol + S-adenosyl-L-homocysteine + H(+). Its pathway is quinol/quinone metabolism; menaquinone biosynthesis; menaquinol from 1,4-dihydroxy-2-naphthoate: step 2/2. Methyltransferase required for the conversion of demethylmenaquinol (DMKH2) to menaquinol (MKH2). This is Demethylmenaquinone methyltransferase from Mycobacterium sp. (strain JLS).